Here is a 298-residue protein sequence, read N- to C-terminus: Serine/threonine-protein kinase 1 (298 aa).

In terms of domain architecture, Protein kinase spans 38–276 (FIATRPMFEG…FKSLVSHPWF (239 aa)). ATP contacts are provided by residues 45-53 (FEGGRNNVF) and K65. Catalysis depends on D152, which acts as the Proton acceptor.

This sequence belongs to the protein kinase superfamily. Ser/Thr protein kinase family.

It is found in the virion. The protein resides in the host cytoplasm. It carries out the reaction L-seryl-[protein] + ATP = O-phospho-L-seryl-[protein] + ADP + H(+). It catalyses the reaction L-threonyl-[protein] + ATP = O-phospho-L-threonyl-[protein] + ADP + H(+). In terms of biological role, essential for viral replication. It may mediate the virus' progression through DNA replication. The chain is Serine/threonine-protein kinase 1 from Ornithodoros (relapsing fever ticks).